Consider the following 196-residue polypeptide: Small ribosomal subunit protein uS4c (196 aa).

Residues 17–36 (ALPGLTRKTPKSGSNLKKKF) form a disordered region. Residues 89 to 150 (MRLDNIVFRL…NQRSKRLVQN (62 aa)) enclose the S4 RNA-binding domain.

Belongs to the universal ribosomal protein uS4 family. In terms of assembly, part of the 30S ribosomal subunit. Contacts protein S5. The interaction surface between S4 and S5 is involved in control of translational fidelity.

It is found in the plastid. Its subcellular location is the chloroplast. Its function is as follows. One of the primary rRNA binding proteins, it binds directly to 16S rRNA where it nucleates assembly of the body of the 30S subunit. Functionally, with S5 and S12 plays an important role in translational accuracy. This is Small ribosomal subunit protein uS4c (rps4) from Tragus racemosus (Carrot grass).